Here is a 66-residue protein sequence, read N- to C-terminus: MCKLRTSKSIIKRFKFKSKNKILRRMAGRSHLLQKKSSKRKQKLRKIVNLKKIDISSWKFRVPYID.

Belongs to the bacterial ribosomal protein bL35 family.

It is found in the plastid. The protein localises to the chloroplast. The protein is Large ribosomal subunit protein bL35c of Gracilaria tenuistipitata var. liui (Red alga).